The sequence spans 330 residues: tRNA pseudouridine synthase B (330 aa).

D42 acts as the Nucleophile in catalysis.

It belongs to the pseudouridine synthase TruB family. Type 1 subfamily.

The catalysed reaction is uridine(55) in tRNA = pseudouridine(55) in tRNA. In terms of biological role, responsible for synthesis of pseudouridine from uracil-55 in the psi GC loop of transfer RNAs. The protein is tRNA pseudouridine synthase B of Lactococcus lactis subsp. cremoris (strain SK11).